A 1299-amino-acid chain; its full sequence is Phosphoribosylformylglycinamidine synthase (1299 aa).

ATP is bound by residues Gly310–Asp321, Thr389–Tyr391, and Ala680. Asp681, Glu720, Asn724, and Asp888 together coordinate Mg(2+). Ser890 contacts ATP. One can recognise a Glutamine amidotransferase type-1 domain in the interval Val1046–Gly1299. Catalysis depends on Cys1139, which acts as the Nucleophile. Catalysis depends on residues His1264 and Glu1266.

This sequence in the N-terminal section; belongs to the FGAMS family. In terms of assembly, monomer.

The protein resides in the cytoplasm. The enzyme catalyses N(2)-formyl-N(1)-(5-phospho-beta-D-ribosyl)glycinamide + L-glutamine + ATP + H2O = 2-formamido-N(1)-(5-O-phospho-beta-D-ribosyl)acetamidine + L-glutamate + ADP + phosphate + H(+). The protein operates within purine metabolism; IMP biosynthesis via de novo pathway; 5-amino-1-(5-phospho-D-ribosyl)imidazole from N(2)-formyl-N(1)-(5-phospho-D-ribosyl)glycinamide: step 1/2. Its function is as follows. Phosphoribosylformylglycinamidine synthase involved in the purines biosynthetic pathway. Catalyzes the ATP-dependent conversion of formylglycinamide ribonucleotide (FGAR) and glutamine to yield formylglycinamidine ribonucleotide (FGAM) and glutamate. The chain is Phosphoribosylformylglycinamidine synthase from Myxococcus xanthus (strain DK1622).